Here is a 234-residue protein sequence, read N- to C-terminus: Isoprenyl transferase (234 aa).

The active site involves aspartate 13. Aspartate 13 contributes to the Mg(2+) binding site. Residues 14–17 (GNGR), tryptophan 18, arginine 26, histidine 30, and 58–60 (STE) contribute to the substrate site. Catalysis depends on asparagine 61, which acts as the Proton acceptor. Substrate-binding positions include tryptophan 62, arginine 64, arginine 180, and 186–188 (RLS). A Mg(2+)-binding site is contributed by glutamate 199.

Belongs to the UPP synthase family. As to quaternary structure, homodimer. The cofactor is Mg(2+).

Catalyzes the condensation of isopentenyl diphosphate (IPP) with allylic pyrophosphates generating different type of terpenoids. This chain is Isoprenyl transferase (uppS), found in Helicobacter pylori (strain ATCC 700392 / 26695) (Campylobacter pylori).